A 554-amino-acid chain; its full sequence is Potassium-transporting ATPase potassium-binding subunit (554 aa).

The next 10 helical transmembrane spans lie at 1 to 21 (MSPVLAGVLQLVALIAALALA), 60 to 80 (PAYLRGVLAFSAVSVLFLYVL), 131 to 151 (GLAVQNFVSASVGIAVAVALV), 174 to 194 (VRVLLPVSVIAAIVLVACGAI), 246 to 266 (PGPFSNLFEIFLILLIPFALT), 279 to 299 (GYAILATMVTIWIGFTALMMW), 375 to 395 (GLYGILIMAVIAVFIAGLMVG), 412 to 432 (FAACYILITPALALVFTAAAM), 481 to 501 (IGIVMLLGRFVPMVFVLALAG), and 525 to 545 (GLLVGAILIITGLTYFPALAL).

The protein belongs to the KdpA family. The system is composed of three essential subunits: KdpA, KdpB and KdpC.

The protein localises to the cell membrane. Its function is as follows. Part of the high-affinity ATP-driven potassium transport (or Kdp) system, which catalyzes the hydrolysis of ATP coupled with the electrogenic transport of potassium into the cytoplasm. This subunit binds the extracellular potassium ions and delivers the ions to the membrane domain of KdpB through an intramembrane tunnel. This is Potassium-transporting ATPase potassium-binding subunit from Streptomyces avermitilis (strain ATCC 31267 / DSM 46492 / JCM 5070 / NBRC 14893 / NCIMB 12804 / NRRL 8165 / MA-4680).